The following is a 286-amino-acid chain: Eukaryotic translation initiation factor 3 subunit F-2 (286 aa).

The region spanning 11 to 147 (ILLQPLVLLH…MRLYTAVVMG (137 aa)) is the MPN domain.

It belongs to the eIF-3 subunit F family. In terms of assembly, component of the eukaryotic translation initiation factor 3 (eIF-3) complex. The eIF-3 complex interacts with pix.

The protein localises to the cytoplasm. Component of the eukaryotic translation initiation factor 3 (eIF-3) complex, which is involved in protein synthesis of a specialized repertoire of mRNAs and, together with other initiation factors, stimulates binding of mRNA and methionyl-tRNAi to the 40S ribosome. The eIF-3 complex specifically targets and initiates translation of a subset of mRNAs involved in cell proliferation. The polypeptide is Eukaryotic translation initiation factor 3 subunit F-2 (Drosophila willistoni (Fruit fly)).